The following is a 442-amino-acid chain: Radical S-adenosyl methionine domain-containing protein 1, mitochondrial (442 aa).

The N-terminal 22 residues, 1 to 22, are a transit peptide targeting the mitochondrion; it reads MALPRSQARGWVKAAKMAQRRR. Residues 1–37 are disordered; it reads MALPRSQARGWVKAAKMAQRRRPADDTGGPQSPAPGS. The Radical SAM core domain occupies 34 to 270; it reads APGSQRAALY…RAVLREAGFR (237 aa). An S-adenosyl-L-methionine-binding site is contributed by Y43. [4Fe-4S] cluster-binding residues include C49, C53, and C56. S-adenosyl-L-methionine-binding positions include G98, 99 to 100, E131, Q158, R170, and D195; that span reads GT.

Belongs to the anaerobic coproporphyrinogen-III oxidase family. HemW subfamily. The cofactor is [4Fe-4S] cluster.

It is found in the mitochondrion. In terms of biological role, may be a heme chaperone, appears to bind heme. Homologous bacterial proteins do not have oxygen-independent coproporphyrinogen-III oxidase activity. Binds 1 [4Fe-4S] cluster. The cluster is coordinated with 3 cysteines and an exchangeable S-adenosyl-L-methionine. The protein is Radical S-adenosyl methionine domain-containing protein 1, mitochondrial (RSAD1) of Bos taurus (Bovine).